A 492-amino-acid chain; its full sequence is Phosphatidylinositol 4-kinase type 2-beta (492 aa).

Residues 1-11 are compositionally biased toward basic and acidic residues; it reads MEPKQTADARD. The interval 1 to 98 is disordered; it reads MEPKQTADAR…SDRENMSGGH (98 aa). Residues 127 to 462 form the PI3K/PI4K catalytic domain; that stretch reads GVFPERISQG…VQMPRVVVER (336 aa). Residues 133 to 139 are G-loop; that stretch reads ISQGSSG. Residues serine 140 and lysine 155 each contribute to the ATP site. The tract at residues 160 to 162 is important for substrate binding; sequence EPY. Residues 168–181 are important for interaction with membranes; it reads KWTKYFHKICCPCC. ATP is bound by residues 264 to 267 and 278 to 279; these read QLFV and RK. An important for interaction with membranes region spans residues 271–279; the sequence is KEADYWLRK. A catalytic loop region spans residues 308 to 316; the sequence is RNTDRGNDN. The interval 353-373 is activation loop; that stretch reads AIDNGLAFPFKHPDEWRAYPF. Residue aspartate 355 coordinates ATP. The important for interaction with membranes stretch occupies residues 368-377; it reads WRAYPFHWAW.

Belongs to the PI3/PI4-kinase family. Type II PI4K subfamily.

It localises to the cytoplasm. The protein localises to the cytosol. The protein resides in the golgi apparatus membrane. Its subcellular location is the endoplasmic reticulum membrane. It is found in the cell membrane. It localises to the early endosome membrane. The catalysed reaction is a 1,2-diacyl-sn-glycero-3-phospho-(1D-myo-inositol) + ATP = a 1,2-diacyl-sn-glycero-3-phospho-(1D-myo-inositol 4-phosphate) + ADP + H(+). In terms of biological role, contributes to the overall PI4-kinase activity of the cell. This contribution may be especially significant in plasma membrane, endosomal and Golgi compartments. The phosphorylation of phosphatidylinositol (PI) to PI4P is the first committed step in the generation of phosphatidylinositol 4,5-bisphosphate (PIP2), a precursor of the second messenger inositol 1,4,5-trisphosphate (InsP3). This Xenopus tropicalis (Western clawed frog) protein is Phosphatidylinositol 4-kinase type 2-beta (pi4k2b).